Reading from the N-terminus, the 718-residue chain is Calpastatin (718 aa).

Disordered stretches follow at residues 1-189 (MNPA…MSST) and 210-238 (EKKTGVAGPPPDSVTPLGPDDAIDALSSD). The segment covering 20–29 (PHSKKRHRRQ) has biased composition (basic residues). Composition is skewed to basic and acidic residues over residues 30–61 (DAKTEPEKSQSTKPPVDHEKKAQEGKPKEHTK) and 68–104 (HASDGEGKHGRNEKTASRSKEPVTPAKRTEPETKPQD). K32 participates in a covalent cross-link: Glycyl lysine isopeptide (Lys-Gly) (interchain with G-Cter in SUMO2). K49 is subject to N6-acetyllysine. Position 86 is a phosphoserine (S86). Residues 114–124 (AAGTTAAPGKA) show a composition bias toward low complexity. 3 positions are modified to phosphoserine: S133, S222, and S243. An Inhibitory domain 1 repeat occupies 170 to 222 (TQEDSTAYTGPEISDPMSSTYIEELGKREVTIPPKYRELLEKKTGVAGPPPDS). Disordered stretches follow at residues 266 to 291 (ESAKVMRAAAPPQEKKRKVEEDAMSD) and 320 to 509 (EAKR…QLPA). S290 is subject to Blocked amino end (Ser); in form erythrocyte. Residues 307-359 (EPELDLSSIKEVAEAKRKEEKVEKCGEDDETVPAEYRLKPATDKDGKPLLPEP) form an Inhibitory domain 2 repeat. Composition is skewed to basic and acidic residues over residues 320–331 (EAKRKEEKVEKC), 342–377 (YRLKPATDKDGKPLLPEPAEKPKPRSESELIDELSK), and 384–399 (SNEKQPKPTGKTEESK). Phosphoserine occurs at positions 367, 369, and 376. Positions 400-411 (AAVPAPVAEAVP) are enriched in low complexity. S444 carries the phosphoserine modification. Basic and acidic residues predominate over residues 446 to 496 (GRKEADPEEGKPVADKIKEKSKEEEREKLGEKEETIPPDYRLEEAKDKDGK). The stretch at 450-503 (ADPEEGKPVADKIKEKSKEEEREKLGEKEETIPPDYRLEEAKDKDGKPLLPSEP) is one Inhibitory domain 3 repeat. Phosphoserine occurs at positions 520, 531, 579, and 581. The disordered stretch occupies residues 543–718 (VSEVVSQSPA…KPKANEKNAS (176 aa)). Basic and acidic residues predominate over residues 566 to 579 (PSNKELDDALDKLS). One copy of the Inhibitory domain 4 repeat lies at 587 to 640 (PDPDENKPMEDKVKERAKKEHKDKLGERDDTIPPEYRHLLDQGEQDKPEKPPTK). Basic and acidic residues-rich tracts occupy residues 587 to 650 (PDPD…KPAG) and 706 to 718 (ETSKPKANEKNAS).

Belongs to the protease inhibitor I27 (calpastatin) family.

In terms of biological role, specific inhibition of calpain (calcium-dependent cysteine protease). Plays a key role in postmortem tenderization of meat and have been proposed to be involved in muscle protein degradation in living tissue. The chain is Calpastatin (CAST) from Oryctolagus cuniculus (Rabbit).